The chain runs to 184 residues: Large ribosomal subunit protein uL22 (184 aa).

Residues 160–184 form a disordered region; sequence PEEEVAQKKKISQKKLKKQKLMARE. Over residues 167-184 the composition is skewed to basic residues; the sequence is KKKISQKKLKKQKLMARE.

Belongs to the universal ribosomal protein uL22 family. Component of the large ribosomal subunit. In terms of tissue distribution, expressed in pancreas, lung, colon, cystic duct, gall bladder, kidney and liver. Expressed at high levels in the well differentiated pancreatic tumor cell lines HPAF, COLO 357 and Capan-1, the moderately differentiated pancreatic tumor cell lines T3M-4, AsPc-1 and BxPc-3, the poorly differentiated pancreatic tumor cell line MIA PaCa-2, and the pancreatic tumor cell lines of undefined differentiation status such as SW979. Expressed at lower levels in the poorly differentiated pancreatic tumor cell lines HCG-25 and PANC-1.

The protein resides in the cytoplasm. Component of the large ribosomal subunit. The ribosome is a large ribonucleoprotein complex responsible for the synthesis of proteins in the cell. In Homo sapiens (Human), this protein is Large ribosomal subunit protein uL22 (RPL17).